Reading from the N-terminus, the 3999-residue chain is Hybrid PKS-NRPS synthetase xenE (3999 aa).

Positions 13–449 (REPIAVVGSG…GTNAHCIIEN (437 aa)) constitute a Ketosynthase family 3 (KS3) domain. Catalysis depends on for beta-ketoacyl synthase activity residues cysteine 186, histidine 325, and histidine 369. Positions 562-879 (VFTGQGAQWP…TGLLNRGKDD (318 aa)) constitute a Malonyl-CoA:ACP transacylase (MAT) domain. Residues 949–1084 (NPLLGSRTTD…GRVIVITGET (136 aa)) form an N-terminal hotdog fold region. The PKS/mFAS DH domain occupies 949–1253 (NPLLGSRTTD…VVAFAEQTED (305 aa)). A dehydratase (DH) domain region spans residues 950–1252 (PLLGSRTTDV…RVVAFAEQTE (303 aa)). Histidine 981 (proton acceptor; for dehydratase activity) is an active-site residue. Residues 1099–1253 (LVDIPEDRFY…VVAFAEQTED (155 aa)) form a C-terminal hotdog fold region. The active-site Proton donor; for dehydratase activity is the aspartate 1159. The methyltransferase (cMeT) domain stretch occupies residues 1298-1593 (YMKQLVTLFP…FSGADSPMPE (296 aa)). The Ketoreductase (KR) domain occupies 2133–2306 (TYVLFGLTSD…AASILHLGAV (174 aa)). One can recognise a Carrier 1 domain in the interval 2414–2495 (EEILEIVQDA…QLVEYAIGSM (82 aa)). Serine 2455 is modified (O-(pantetheine 4'-phosphoryl)serine). Residues 2501-2573 (PNRADSAKAS…EESPSESVND (73 aa)) form a disordered region. Over residues 2526–2554 (SVSSSPSSLPKTSASGSSQQMSEGSSKTS) the composition is skewed to low complexity. The segment at 2580 to 3015 (EKVLPVSPGQ…EEVSLFTEQE (436 aa)) is condensation. Residues 3045 to 3453 (AVHTDKVALK…RIEGDTQIKL (409 aa)) form an adenylation region. The 81-residue stretch at 3562 to 3642 (RKLTDTESKL…AMAAAIQDTS (81 aa)) folds into the Carrier 2 domain. O-(pantetheine 4'-phosphoryl)serine is present on serine 3602. Residues 3681–3900 (LTGATGFLGK…IDLITVEKAA (220 aa)) are reductase-like (R) domain (R).

It in the C-terminal section; belongs to the NRP synthetase family.

It functions in the pathway mycotoxin biosynthesis. Its function is as follows. Hybrid PKS-NRPS synthetase; part of the gene cluster that mediates the biosynthesis of xenoacremones such as xenoacremone A, a compound that shows inhibitory activity toward the PI3K/AKT signaling pathway and which has the ability to induce apoptosis of A549 lung cancer cells. Within the pathway, cooperation of the hybrid PKS-NRPS xenE and the trans-acting enoyl reductase xenG is responsible for the formation of the reduced tyrosine-nonaketide derivative. The PKS module of xenE acted in combination with the trans-acting enoyl reductase xenG to produce a double-methylated nonaketide attached to the ACP domain. In parallel, the adenylation (A) domain of the NRPS module activated L-tyrosine, which was then transferred to the ACP domain. The condensation (C) domain subsequently linked this group to the polyketide chain, forming an enzyme-bound amide. Reductive release by the C-terminal R domain afforded the aldehyde derivative. The alpha/beta hydrolase xenA then accelerates intramolecular nucleophilic attack to give a pyrrolidone derivative. Subsequently, three enzymes, xenF, xenD, and xenC, coordinately participate in the conversion to xenoacremone B. XenF catalyzes sigmatropic rearrangement to form an A-ring, which leads to an unusual intermediate with a hexane ring, which is required for the formation of the tricarbocyclic product. Epoxidation catalyzed by xenD and the formation of the paracyclophane ether catalyzed by xenC initiate a spontaneous intramolecular Diels-Alder (IMDA) reaction to yield xenoacremone B. Spontaneous hydration of xenoacremone B leads to the formation of xenoacremone A, which undergoes subsequent methylation to afford xenoacremone C. The protein is Hybrid PKS-NRPS synthetase xenE of Xenoacremonium sinensis (Endophyte fungus).